The following is a 245-amino-acid chain: Probable phosphatase YcdX (245 aa).

Residues His-7, His-9, His-15, His-40, Glu-73, His-101, His-131, Asp-192, and His-194 each coordinate Zn(2+).

It belongs to the PHP family. As to quaternary structure, homotrimer. Zn(2+) is required as a cofactor.

The sequence is that of Probable phosphatase YcdX from Shigella dysenteriae serotype 1 (strain Sd197).